A 548-amino-acid chain; its full sequence is Rhodopsin kinase GRK7 (548 aa).

A Phosphoserine; by PKA modification is found at Ser-34. Residues 54-171 (FHSLCEQQPI…LASPFYDRFL (118 aa)) enclose the RGS domain. The 264-residue stretch at 186–449 (FTEFRVLGKG…ADDPRKHPFF (264 aa)) folds into the Protein kinase domain. ATP is bound by residues 192–200 (LGKGGFGEV) and Lys-215. Catalysis depends on Asp-311, which acts as the Proton acceptor. One can recognise an AGC-kinase C-terminal domain in the interval 450-515 (QTVNFPRLEA…GAVPVAWQEE (66 aa)). The interval 523-548 (EELNDPNRPSGDGKGDSSKSGVCLLL) is disordered. Cys-545 is subject to Cysteine methyl ester. Cys-545 is lipidated: S-geranylgeranyl cysteine. Positions 546-548 (LLL) are cleaved as a propeptide — removed in mature form.

Belongs to the protein kinase superfamily. AGC Ser/Thr protein kinase family. GPRK subfamily. Interacts (when prenylated) with PDE6D; this promotes release from membranes. Autophosphorylated. Phosphorylation at Ser-34 is regulated by light and activated by cAMP. In terms of tissue distribution, retina. Cones and rod.

Its subcellular location is the membrane. The enzyme catalyses L-threonyl-[rhodopsin] + ATP = O-phospho-L-threonyl-[rhodopsin] + ADP + H(+). It carries out the reaction L-seryl-[rhodopsin] + ATP = O-phospho-L-seryl-[rhodopsin] + ADP + H(+). With respect to regulation, inhibited by phosphorylation of Ser-34. Its function is as follows. Retina-specific kinase involved in the shutoff of the photoresponse and adaptation to changing light conditions via cone opsin phosphorylation, including rhodopsin (RHO). The chain is Rhodopsin kinase GRK7 (GRK7) from Ictidomys tridecemlineatus (Thirteen-lined ground squirrel).